We begin with the raw amino-acid sequence, 472 residues long: 3-isopropylmalate dehydratase large subunit (472 aa).

[4Fe-4S] cluster contacts are provided by Cys-347, Cys-407, and Cys-410.

This sequence belongs to the aconitase/IPM isomerase family. LeuC type 1 subfamily. As to quaternary structure, heterodimer of LeuC and LeuD. Requires [4Fe-4S] cluster as cofactor.

The enzyme catalyses (2R,3S)-3-isopropylmalate = (2S)-2-isopropylmalate. It participates in amino-acid biosynthesis; L-leucine biosynthesis; L-leucine from 3-methyl-2-oxobutanoate: step 2/4. Its function is as follows. Catalyzes the isomerization between 2-isopropylmalate and 3-isopropylmalate, via the formation of 2-isopropylmaleate. The chain is 3-isopropylmalate dehydratase large subunit from Synechococcus sp. (strain CC9605).